Here is a 1263-residue protein sequence, read N- to C-terminus: MWLGPEEVLVANALWVTERANPFFVLQRRRGHGKGGGLTGLLVGTLDVVLDSSARVAPYRILHQTQDSQVYWIVACGSSRKEITKHWEWLENNLLQTLSIFDNEEDITTFVKGKIHGIIAEENKNLQPQGDEDPGKFKEAELKMRKQFGMPEGEKLVNYYSCNFWKGRVPRQGWLYLTVNHLCFYSFLLGKEVSLVVQWVDVTRLEKNATLLFPESIRVDTRDQELFFSMFLNIGETFKLMEQLANLAMRQLLDSEGFLEDKALPRPIRPHKNISALKRDLDARAKNECYRATFRLPKDERLDGHTGCTLWTPFNKLHIPGQMFISNNYICFASKEEDACRLIIPLREVTIVEKADSSSVLPSPLSISTKSKMTFLFANLKDRDFLVQRISDFLQKTPSKQTGSSIGGTKASVSDPAPESLPTPQEASEPPASPSSPLSSPPSFSTQEIPTTSQGLLKVFQKNSPMEDLGAKGAKEKMKEESWNIHFFEYGRGMCMYRTAKTRELVLKGIPESLRGELWLLFSGAWNEMVTHPGYYAELVEKSLGKYSLATEEIERDLHRSMPEHPAFQNELGIAALRRVLTAYAFRNPTIGYCQAMNIVTSVLLLYGSEEEAFWLLVALCERMLPDYYNTRVVGALVDQGIFEELTRDVLPRLSEKMQELGVISSISLSWFLTLFLSVMPFESAVVIVDCFFYEGIKVILQVALAVLDANVEQLLDCNDEGEAMTVLGRYLDNVVNKQSISPPIPHLHALLTSGDDPPVEVDIFDLLRVSYEKFSNLRADDIEQMRFKQRLKVIQSLEDTAKRSVVRAIPGDIGFSIEELEDLYMVFKAKHLASQYWGGNRSAAVHRDPSLPYLEQYRIDASQFRELFASLTPWACGSHTPVLAGRMFRLLDQNKDSLINFKEFVTGMSGMYHGDLTEKLKALYKLHLPPALIPEEAESALEAAHYFTEDSSSEASPLASDLDLFLPWEAQALLQEQQEGSGNEDTPERREEKGTSPPDYRHYLRMWAKEKEAQKETIKDLPKMNQEQFIELCKTLYNMFSEDPMEQDLYHAIATVASLLLRIGEVGKKFSALTTKKPRDGAHSGDPNSATEEDEPPTPKLHQDPTQECQPPAAGDRQAKASGDMHLGKALQDSHVIVEGGSGEGQGSPSLLLSDDETKDDMSMSSYSVVSTGSLQCEDLTEDTVLVGGGACSPTATSRAGGTVDTDWCISFEQILASILTESVLVNFFEKRVDIGLKIKDQKKVERQFSTSSDHEPPGVLG.

GRAM domains are found at residues 142–209 (LKMR…EKNA) and 288–356 (ECYR…EKAD). A Phosphothreonine modification is found at threonine 397. The interval 397–449 (TPSKQTGSSIGGTKASVSDPAPESLPTPQEASEPPASPSSPLSSPPSFSTQEI) is disordered. Residues serine 412, serine 433, serine 436, and serine 464 each carry the phosphoserine modification. Residues 422-447 (PTPQEASEPPASPSSPLSSPPSFSTQ) show a composition bias toward low complexity. The region spanning 509-696 (GIPESLRGEL…VIVDCFFYEG (188 aa)) is the Rab-GAP TBC domain. Residues 669–689 (LSWFLTLFLSVMPFESAVVIV) traverse the membrane as a helical segment. The region spanning 880-915 (HTPVLAGRMFRLLDQNKDSLINFKEFVTGMSGMYHG) is the EF-hand domain. Disordered stretches follow at residues 977–1002 (EQQEGSGNEDTPERREEKGTSPPDYR), 1075–1126 (TTKK…SGDM), and 1139–1159 (VEGGSGEGQGSPSLLLSDDET). A compositionally biased stretch (basic and acidic residues) spans 987–1002 (TPERREEKGTSPPDYR). Residue serine 1254 is modified to Phosphoserine.

The protein resides in the membrane. May act as a GTPase-activating protein for Rab family protein(s). The protein is TBC1 domain family member 9B (Tbc1d9b) of Mus musculus (Mouse).